The following is a 399-amino-acid chain: Accessory Sec system protein translocase subunit SecY2 (399 aa).

10 consecutive transmembrane segments (helical) span residues 14–34 (IFFT…SIVS), 60–80 (LNIF…LTLI), 102–122 (ALTL…YINK), 128–148 (SNML…VWLA), 152–172 (TTYG…KSIF), 183–203 (ASLI…LFFI), 237–257 (ISIM…NFIG), 272–292 (FTNP…GYFL), 335–355 (WFGS…ALLV), and 362–382 (VYFT…AETI).

This sequence belongs to the SecY/SEC61-alpha family. SecY2 subfamily. Component of the accessory SecA2/SecY2 protein translocase complex required to export cell wall proteins. May form heterotrimers with SecE and SecG subunits.

It is found in the cell membrane. Its function is as follows. Part of the accessory SecA2/SecY2 system specifically required for export of possible cell wall proteins. The central subunit of a protein translocation channel. The protein is Accessory Sec system protein translocase subunit SecY2 of Staphylococcus epidermidis (strain ATCC 12228 / FDA PCI 1200).